A 214-amino-acid polypeptide reads, in one-letter code: NADH-quinone oxidoreductase subunit C (214 aa).

This sequence belongs to the complex I 30 kDa subunit family. As to quaternary structure, NDH-1 is composed of 14 different subunits. Subunits NuoB, C, D, E, F, and G constitute the peripheral sector of the complex.

It localises to the cell inner membrane. It catalyses the reaction a quinone + NADH + 5 H(+)(in) = a quinol + NAD(+) + 4 H(+)(out). Functionally, NDH-1 shuttles electrons from NADH, via FMN and iron-sulfur (Fe-S) centers, to quinones in the respiratory chain. The immediate electron acceptor for the enzyme in this species is believed to be ubiquinone. Couples the redox reaction to proton translocation (for every two electrons transferred, four hydrogen ions are translocated across the cytoplasmic membrane), and thus conserves the redox energy in a proton gradient. This is NADH-quinone oxidoreductase subunit C from Francisella tularensis subsp. holarctica (strain LVS).